The primary structure comprises 354 residues: Fructose-bisphosphate aldolase (354 aa).

S61 lines the D-glyceraldehyde 3-phosphate pocket. D104 serves as the catalytic Proton donor. H105, D139, E169, and H221 together coordinate Zn(2+). G222 is a binding site for dihydroxyacetone phosphate. H260 is a Zn(2+) binding site. Residues 261–263 (GGS) and 282–285 (NIDT) each bind dihydroxyacetone phosphate.

It belongs to the class II fructose-bisphosphate aldolase family. In terms of assembly, homodimer. Requires Zn(2+) as cofactor.

The enzyme catalyses beta-D-fructose 1,6-bisphosphate = D-glyceraldehyde 3-phosphate + dihydroxyacetone phosphate. The protein operates within carbohydrate degradation; glycolysis; D-glyceraldehyde 3-phosphate and glycerone phosphate from D-glucose: step 4/4. Functionally, catalyzes the aldol condensation of dihydroxyacetone phosphate (DHAP or glycerone-phosphate) with glyceraldehyde 3-phosphate (G3P) to form fructose 1,6-bisphosphate (FBP) in gluconeogenesis and the reverse reaction in glycolysis. This is Fructose-bisphosphate aldolase (fba) from Campylobacter jejuni subsp. jejuni serotype O:23/36 (strain 81-176).